We begin with the raw amino-acid sequence, 213 residues long: Octanoyltransferase (213 aa).

The region spanning 32–207 (ENSHDEIWLV…NILALLNNPP (176 aa)) is the BPL/LPL catalytic domain. Substrate contacts are provided by residues 71–78 (RGGQVTYH), 138–140 (SLG), and 151–153 (GLA). Residue C169 is the Acyl-thioester intermediate of the active site.

It belongs to the LipB family.

It localises to the cytoplasm. It carries out the reaction octanoyl-[ACP] + L-lysyl-[protein] = N(6)-octanoyl-L-lysyl-[protein] + holo-[ACP] + H(+). Its pathway is protein modification; protein lipoylation via endogenous pathway; protein N(6)-(lipoyl)lysine from octanoyl-[acyl-carrier-protein]: step 1/2. Functionally, catalyzes the transfer of endogenously produced octanoic acid from octanoyl-acyl-carrier-protein onto the lipoyl domains of lipoate-dependent enzymes. Lipoyl-ACP can also act as a substrate although octanoyl-ACP is likely to be the physiological substrate. The chain is Octanoyltransferase from Salmonella paratyphi A (strain ATCC 9150 / SARB42).